A 176-amino-acid polypeptide reads, in one-letter code: Nucleoside triphosphate/diphosphate phosphatase (176 aa).

Catalysis depends on arginine 23, which acts as the Proton donor. Residues asparagine 87, aspartate 103, aspartate 105, aspartate 107, aspartate 120, and glutamate 123 each coordinate Mg(2+).

This sequence belongs to the Ntdp family. The cofactor is Mg(2+).

The enzyme catalyses a ribonucleoside 5'-triphosphate + H2O = a ribonucleoside 5'-diphosphate + phosphate + H(+). It carries out the reaction a ribonucleoside 5'-diphosphate + H2O = a ribonucleoside 5'-phosphate + phosphate + H(+). Functionally, has nucleoside phosphatase activity towards nucleoside triphosphates and nucleoside diphosphates. The sequence is that of Nucleoside triphosphate/diphosphate phosphatase (ygaC) from Bacillus subtilis (strain 168).